A 569-amino-acid polypeptide reads, in one-letter code: 4-hydroxy-7-methoxy-3-oxo-3,4-dihydro-2H-1,4-benzoxazin-2-yl glucoside beta-D-glucosidase 1a, chloroplastic (569 aa).

A chloroplast-targeting transit peptide spans M1–A50. A beta-D-glucoside contacts are provided by residues Q92, H194, and N239–E240. Catalysis depends on E240, which acts as the Proton donor. C259 and C265 are disulfide-bonded. Residues Y383, E456, W504, E511 to W512, and F520 contribute to the a beta-D-glucoside site. The active-site Nucleophile is the E456.

Belongs to the glycosyl hydrolase 1 family. Homo- and heterohexamers. In terms of tissue distribution, expressed in young seedlings early after germination.

It is found in the plastid. The protein resides in the chloroplast. It carries out the reaction Hydrolysis of terminal, non-reducing beta-D-glucosyl residues with release of beta-D-glucose.. The enzyme catalyses DIMBOA beta-D-glucoside + H2O = DIMBOA + D-glucose. The catalysed reaction is DIBOA beta-D-glucoside + H2O = DIBOA + D-glucose. Its function is as follows. Acts in defense of young plant parts against pests via the production of hydroxamic acids from hydroxamic acid glucosides. Enzymatic activity is highly correlated with plant growth. The preferred substrate is DIMBOA-beta-D-glucoside. The polypeptide is 4-hydroxy-7-methoxy-3-oxo-3,4-dihydro-2H-1,4-benzoxazin-2-yl glucoside beta-D-glucosidase 1a, chloroplastic (GLU1A) (Triticum aestivum (Wheat)).